The primary structure comprises 1009 residues: Protein translocase subunit SecA (1009 aa).

ATP-binding positions include Gln86, 104-108 (GEGKT), and Asp497. Disordered regions lie at residues 869–894 (AVPQ…GQQP) and 949–1009 (ERRP…RNAG). Composition is skewed to low complexity over residues 883 to 894 (PVPAATAPGQQP) and 953 to 973 (SGAA…AGAG). The Zn(2+) site is built by Cys990, Cys992, Cys1001, and His1002.

Belongs to the SecA family. As to quaternary structure, monomer and homodimer. Part of the essential Sec protein translocation apparatus which comprises SecA, SecYEG and auxiliary proteins SecDF. Other proteins may also be involved. Requires Zn(2+) as cofactor.

Its subcellular location is the cell membrane. The protein localises to the cytoplasm. It catalyses the reaction ATP + H2O + cellular proteinSide 1 = ADP + phosphate + cellular proteinSide 2.. Functionally, part of the Sec protein translocase complex. Interacts with the SecYEG preprotein conducting channel. Has a central role in coupling the hydrolysis of ATP to the transfer of proteins into and across the cell membrane, serving as an ATP-driven molecular motor driving the stepwise translocation of polypeptide chains across the membrane. This is Protein translocase subunit SecA from Acidothermus cellulolyticus (strain ATCC 43068 / DSM 8971 / 11B).